Consider the following 134-residue polypeptide: ATP synthase epsilon chain, chloroplastic (134 aa).

The protein belongs to the ATPase epsilon chain family. F-type ATPases have 2 components, CF(1) - the catalytic core - and CF(0) - the membrane proton channel. CF(1) has five subunits: alpha(3), beta(3), gamma(1), delta(1), epsilon(1). CF(0) has three main subunits: a, b and c.

It is found in the plastid. The protein resides in the chloroplast thylakoid membrane. Functionally, produces ATP from ADP in the presence of a proton gradient across the membrane. In Spinacia oleracea (Spinach), this protein is ATP synthase epsilon chain, chloroplastic.